The chain runs to 141 residues: ATP synthase epsilon chain (141 aa).

Belongs to the ATPase epsilon chain family. F-type ATPases have 2 components, CF(1) - the catalytic core - and CF(0) - the membrane proton channel. CF(1) has five subunits: alpha(3), beta(3), gamma(1), delta(1), epsilon(1). CF(0) has three main subunits: a, b and c.

The protein resides in the cell inner membrane. Functionally, produces ATP from ADP in the presence of a proton gradient across the membrane. The chain is ATP synthase epsilon chain from Pseudomonas aeruginosa (strain LESB58).